The sequence spans 142 residues: Phosphoribosyl-AMP cyclohydrolase (142 aa).

Mg(2+) is bound at residue aspartate 92. Cysteine 93 lines the Zn(2+) pocket. Mg(2+) is bound by residues aspartate 94 and aspartate 96. Positions 109 and 116 each coordinate Zn(2+).

Belongs to the PRA-CH family. As to quaternary structure, homodimer. Mg(2+) is required as a cofactor. It depends on Zn(2+) as a cofactor.

It localises to the cytoplasm. The catalysed reaction is 1-(5-phospho-beta-D-ribosyl)-5'-AMP + H2O = 1-(5-phospho-beta-D-ribosyl)-5-[(5-phospho-beta-D-ribosylamino)methylideneamino]imidazole-4-carboxamide. The protein operates within amino-acid biosynthesis; L-histidine biosynthesis; L-histidine from 5-phospho-alpha-D-ribose 1-diphosphate: step 3/9. In terms of biological role, catalyzes the hydrolysis of the adenine ring of phosphoribosyl-AMP. The chain is Phosphoribosyl-AMP cyclohydrolase from Alkalilimnicola ehrlichii (strain ATCC BAA-1101 / DSM 17681 / MLHE-1).